A 216-amino-acid polypeptide reads, in one-letter code: Pyrophosphatase PpaX (216 aa).

Residue Asp-9 is the Nucleophile of the active site.

Belongs to the HAD-like hydrolase superfamily. PpaX family. Mg(2+) serves as cofactor.

It catalyses the reaction diphosphate + H2O = 2 phosphate + H(+). In terms of biological role, hydrolyzes pyrophosphate formed during P-Ser-HPr dephosphorylation by HPrK/P. Might play a role in controlling the intracellular pyrophosphate pool. This Bacillus anthracis (strain CDC 684 / NRRL 3495) protein is Pyrophosphatase PpaX.